The sequence spans 199 residues: 5'-deoxynucleotidase CKO_00504 (199 aa).

Residues 18-19 (RW) and His33 contribute to the substrate site. The HD domain maps to 30-142 (VSEHSLQVAM…VKQADALCAY (113 aa)). Residues His33, His68, and Asp69 each contribute to the a divalent metal cation site. Residues Asp69, 77-80 (DLPT), and Asp137 contribute to the substrate site. Asp137 provides a ligand contact to a divalent metal cation.

Belongs to the 5DNU family. As to quaternary structure, homodimer. Requires a divalent metal cation as cofactor.

Its subcellular location is the cytoplasm. The catalysed reaction is a 2'-deoxyribonucleoside 5'-phosphate + H2O = a 2'-deoxyribonucleoside + phosphate. Functionally, catalyzes the strictly specific dephosphorylation of 2'-deoxyribonucleoside 5'-monophosphates. In Citrobacter koseri (strain ATCC BAA-895 / CDC 4225-83 / SGSC4696), this protein is 5'-deoxynucleotidase CKO_00504.